The sequence spans 331 residues: Rho GTPase-activating protein 5 (331 aa).

A CRIB domain is found at 3-16; it reads IGGPTNIRHVAHVT. The region spanning 48 to 225 is the Rho-GAP domain; the sequence is VSTESMQLSY…LLKSLTEKTV (178 aa). Residues 227 to 251 are compositionally biased toward basic and acidic residues; that stretch reads EREASSSVVDRRCSKEAEDGEKEKD. The disordered stretch occupies residues 227–331; it reads EREASSSVVD…VQPPICSSNP (105 aa). Residues 252–277 are compositionally biased toward acidic residues; it reads NEEEEEDEEEEEEEEDEDEDEEEEGD.

Expressed in differentiating xylem cells.

It localises to the cell membrane. In terms of biological role, acts as a GTPase activator for the Rac-type GTPase by converting it to an inactive GDP-bound state. The chain is Rho GTPase-activating protein 5 (ROPGAP5) from Arabidopsis thaliana (Mouse-ear cress).